A 162-amino-acid chain; its full sequence is Caveolin-2 (162 aa).

The Cytoplasmic portion of the chain corresponds to 1 to 86 (MGLETEKADV…FEISKYVMYK (86 aa)). Y19 is subject to Phosphotyrosine; by SRC. Residues S20 and S23 each carry the phosphoserine modification. Y27 carries the phosphotyrosine; by SRC modification. S36 is subject to Phosphoserine. The helical intramembrane region spans 87 to 107 (FLTVFLAIPLAFLAGILFATL). Topologically, residues 108-162 (SCLHIWIIMPFVKTCLMVLPSVQTIWKSVTDAIIAPLCTSIGRSFSSVSLQLSQD) are cytoplasmic.

Belongs to the caveolin family. As to quaternary structure, monomer or homodimer. Interacts with CAV1; the interaction forms a stable heterooligomeric complex that is required for targeting to lipid rafts and for caveolae formation. Tyrosine phosphorylated forms do not form heterooligomers with the Tyr-19-phosphorylated form existing as a monomer or dimer, and the Tyr-27-form as a monomer only. Interacts (tyrosine phosphorylated form) with the SH2 domain-containing proteins, RASA1, NCK1 and SRC. Interacts (tyrosine phosphorylated form) with INSR, the interaction (Tyr-27-phosphorylated form) is increased on insulin stimulation. Interacts (Tyr-19 phosphorylated form) with MAPK1 (phosphorylated form); the interaction, promoted by insulin, leads to nuclear location and MAPK1 activation. Interacts with STAT3; the interaction is increased on insulin-induced tyrosine phosphorylation leading to STAT activation. In terms of processing, phosphorylated on serine and tyrosine residues. CAV1 promotes phosphorylation on Ser-23 which then targets the complex to the plasma membrane, lipid rafts and caveolae. Phosphorylation on Ser-36 appears to modulate mitosis in endothelial cells. Phosphorylation on both Tyr-19 and Tyr-27 is required for insulin-induced 'Ser-727' phosphorylation of STAT3 and its activation. Phosphorylation on Tyr-19 is required for insulin-induced phosphorylation of MAPK1 and DNA binding of STAT3. Tyrosine phosphorylation is induced by both EGF and insulin (By. similarity).

It is found in the nucleus. The protein localises to the cytoplasm. The protein resides in the golgi apparatus membrane. It localises to the cell membrane. Its subcellular location is the membrane. It is found in the caveola. May act as a scaffolding protein within caveolar membranes. Interacts directly with G-protein alpha subunits and can functionally regulate their activity. Acts as an accessory protein in conjunction with CAV1 in targeting to lipid rafts and driving caveolae formation. The Ser-36 phosphorylated form has a role in modulating mitosis in endothelial cells. Positive regulator of cellular mitogenesis of the MAPK signaling pathway. Required for the insulin-stimulated nuclear translocation and activation of MAPK1 and STAT3, and the subsequent regulation of cell cycle progression. The sequence is that of Caveolin-2 (CAV2) from Callithrix jacchus (White-tufted-ear marmoset).